The primary structure comprises 401 residues: Acetate kinase (401 aa).

A Mg(2+)-binding site is contributed by asparagine 9. An ATP-binding site is contributed by lysine 16. Arginine 88 contacts substrate. Residue aspartate 147 is the Proton donor/acceptor of the active site. Residues 207-211, 282-284, and 333-337 each bind ATP; these read HLGNG, DCR, and GIGEN. Glutamate 388 contacts Mg(2+).

The protein belongs to the acetokinase family. Homodimer. Mg(2+) serves as cofactor. Requires Mn(2+) as cofactor.

The protein localises to the cytoplasm. The enzyme catalyses acetate + ATP = acetyl phosphate + ADP. Its pathway is metabolic intermediate biosynthesis; acetyl-CoA biosynthesis; acetyl-CoA from acetate: step 1/2. Functionally, catalyzes the formation of acetyl phosphate from acetate and ATP. Can also catalyze the reverse reaction. The chain is Acetate kinase from Haemophilus influenzae (strain 86-028NP).